The following is a 235-amino-acid chain: MMTLLAILAVSYIIGSIPTSIMAGKMLKRIDIRQFGSGNAGGTNAFRVLGWKTGLSVTLIDIAKGVIAAVSVVAFFRMHPIGAYPDINEVALRLLAGMAAVIGHVFTVFAGFKGGKGVSTAAGMLIGIAPVSMLIVIGIFLLTVWLSRYVSVASILAAIAFPLIIAIRKYVFELGGGLDYYIRLFGESFSFHDSLDYHLMIFGLIVALAILYTHRANIRRLISGTENRITFGKSA.

A run of 6 helical transmembrane segments spans residues L4 to G24, S56 to F76, L94 to G114, L125 to W145, V152 to F172, and F191 to L211.

This sequence belongs to the PlsY family. In terms of assembly, probably interacts with PlsX.

The protein localises to the cell inner membrane. The enzyme catalyses an acyl phosphate + sn-glycerol 3-phosphate = a 1-acyl-sn-glycero-3-phosphate + phosphate. It participates in lipid metabolism; phospholipid metabolism. Catalyzes the transfer of an acyl group from acyl-phosphate (acyl-PO(4)) to glycerol-3-phosphate (G3P) to form lysophosphatidic acid (LPA). This enzyme utilizes acyl-phosphate as fatty acyl donor, but not acyl-CoA or acyl-ACP. This chain is Glycerol-3-phosphate acyltransferase, found in Chlorobium luteolum (strain DSM 273 / BCRC 81028 / 2530) (Pelodictyon luteolum).